The primary structure comprises 417 residues: Equilibrative nucleotide transporter 2 (417 aa).

11 helical membrane passes run 20–40 (AVCW…LTIV), 52–72 (PSRI…SVLV), 85–105 (LFGY…NLAT), 109–129 (GGIG…LADA), 144–164 (PEFL…TSGL), 185–205 (LFFA…AYVF), 265–285 (LAVT…GFLS), 292–312 (SLGD…DLVG), 328–348 (CLLI…ITGI), 354–374 (WMIF…VCVI), and 393–413 (LVLY…LWLV).

This sequence belongs to the SLC29A/ENT transporter (TC 2.A.57) family. Expressed in leaves and flowers.

Its subcellular location is the cell membrane. May be involved in nucleoside transport. The polypeptide is Equilibrative nucleotide transporter 2 (ENT2) (Arabidopsis thaliana (Mouse-ear cress)).